Reading from the N-terminus, the 356-residue chain is Galectin-9C (356 aa).

Positions phenylalanine 17–glutamine 148 constitute a Galectin 1 domain. Residue tryptophan 82–lysine 88 participates in a beta-D-galactoside binding. The disordered stretch occupies residues phenylalanine 170–alanine 190. Positions phenylalanine 228–threonine 356 constitute a Galectin 2 domain. A beta-D-galactoside is bound at residue tryptophan 288–serine 294.

Its function is as follows. Binds galactosides. In Homo sapiens (Human), this protein is Galectin-9C (LGALS9C).